We begin with the raw amino-acid sequence, 78 residues long: Major outer membrane lipoprotein Lpp (78 aa).

Residues 1–19 (MKAKIVLGAVILASGLLAG) form the signal peptide. Residue cysteine 20 is the site of N-palmitoyl cysteine attachment. Cysteine 20 is lipidated: S-diacylglycerol cysteine. 2 consecutive repeats follow at residues 25–35 (NAQLDQISSDV) and 39–49 (NTQVQQLSSDV). A coiled-coil region spans residues 28-62 (LDQISSDVNRLNTQVQQLSSDVQSANAQAKAAYEA). Lysine 78 carries the post-translational modification N6-murein peptidoglycan lysine.

The protein belongs to the Lpp family. As to quaternary structure, homotrimer.

The protein resides in the cell outer membrane. It is found in the secreted. Its subcellular location is the cell wall. Functionally, a highly abundant outer membrane lipoprotein that controls the distance between the inner and outer membranes. The only protein known to be covalently linked to the peptidoglycan network (PGN). Also non-covalently binds the PGN. The link between the cell outer membrane and PGN contributes to maintenance of the structural and functional integrity of the cell envelope, and maintains the correct distance between the PGN and the outer membrane. In Proteus mirabilis, this protein is Major outer membrane lipoprotein Lpp.